The following is an 825-amino-acid chain: Glycerol-3-phosphate acyltransferase (825 aa).

An HXXXXD motif motif is present at residues 304-309 (CHRSHM). Residues 803–825 (MPAETSNQPEAPETPEPEGKTES) are disordered.

The protein belongs to the GPAT/DAPAT family.

Its subcellular location is the cell inner membrane. The enzyme catalyses sn-glycerol 3-phosphate + an acyl-CoA = a 1-acyl-sn-glycero-3-phosphate + CoA. The protein operates within phospholipid metabolism; CDP-diacylglycerol biosynthesis; CDP-diacylglycerol from sn-glycerol 3-phosphate: step 1/3. In Yersinia pseudotuberculosis serotype O:1b (strain IP 31758), this protein is Glycerol-3-phosphate acyltransferase.